The chain runs to 343 residues: Anthranilate phosphoribosyltransferase (343 aa).

5-phospho-alpha-D-ribose 1-diphosphate is bound by residues G83, 86-87 (GD), T91, 93-96 (NIST), 111-119 (KHGGRSVSS), and S123. G83 is an anthranilate binding site. Residue S95 participates in Mg(2+) binding. R169 is a binding site for anthranilate. Residues D228 and E229 each contribute to the Mg(2+) site.

Belongs to the anthranilate phosphoribosyltransferase family. Homodimer. The cofactor is Mg(2+).

It catalyses the reaction N-(5-phospho-beta-D-ribosyl)anthranilate + diphosphate = 5-phospho-alpha-D-ribose 1-diphosphate + anthranilate. Its pathway is amino-acid biosynthesis; L-tryptophan biosynthesis; L-tryptophan from chorismate: step 2/5. Functionally, catalyzes the transfer of the phosphoribosyl group of 5-phosphorylribose-1-pyrophosphate (PRPP) to anthranilate to yield N-(5'-phosphoribosyl)-anthranilate (PRA). This chain is Anthranilate phosphoribosyltransferase, found in Thiobacillus denitrificans (strain ATCC 25259 / T1).